The chain runs to 420 residues: Tyrosine--tRNA ligase (420 aa).

Residue tyrosine 36 participates in L-tyrosine binding. The 'HIGH' region signature appears at 41–50 (PTADSLHIGH). L-tyrosine-binding residues include tyrosine 170 and glutamine 174. A 'KMSKS' region motif is present at residues 231 to 235 (KFGKS). Lysine 234 is a binding site for ATP. The S4 RNA-binding domain occupies 353-420 (SNIIDVLIET…KKKYFMVNYK (68 aa)).

This sequence belongs to the class-I aminoacyl-tRNA synthetase family. TyrS type 1 subfamily. Homodimer.

Its subcellular location is the cytoplasm. The enzyme catalyses tRNA(Tyr) + L-tyrosine + ATP = L-tyrosyl-tRNA(Tyr) + AMP + diphosphate + H(+). Functionally, catalyzes the attachment of tyrosine to tRNA(Tyr) in a two-step reaction: tyrosine is first activated by ATP to form Tyr-AMP and then transferred to the acceptor end of tRNA(Tyr). This is Tyrosine--tRNA ligase from Staphylococcus haemolyticus (strain JCSC1435).